The primary structure comprises 455 residues: Probable Xaa-Pro aminopeptidase GSTUM_00008071001 (455 aa).

Mn(2+) is bound by residues D251, D262, E386, and E426.

The protein belongs to the peptidase M24B family. Requires Mn(2+) as cofactor.

It carries out the reaction Release of any N-terminal amino acid, including proline, that is linked to proline, even from a dipeptide or tripeptide.. In terms of biological role, catalyzes the removal of a penultimate prolyl residue from the N-termini of peptides. The sequence is that of Probable Xaa-Pro aminopeptidase GSTUM_00008071001 from Tuber melanosporum (strain Mel28) (Perigord black truffle).